The following is a 1028-amino-acid chain: MKFFALFIYRPVATILISIAITLCGVLGFRLLPVAPLPQVDFPVIMVSASLPGASPETMASSVATPLERSLGRIAGVSEMTSSSSLGSTRIILQFNFDRDINGAARDVQAAINAAQSLLPSGMPSRPTYRKANPSDAPIMILTLTSDTWSQGELYDFASTQLAQTIAQIDGVGDVDVGGSSLPAVRVGLNPQALFNQGVSLDDVRSAISNANVRKPQGAIDDKTHRWQVQTNDELKTATEYQPLIIHYNNGAAVRLGDVATVTDSVQDVRNAGMTNAKPAILLMIRKLPEANIIQTVDSIREKLPELQTLIPASIDLQIAQDRSPTIRASLEEVEQTLVISVALVILVVFLFLRSGRATLIPAVAVPVSLIGTFAAMYLCGFSLNNLSLMALTIATGFVVDDAIVVLENISRHLEAGMKPLQAALQGTREVGFTVLSMSLSLVAVFLPLLLMGGLPGRLLREFAVTLSVAIGISLLVSLTLTPMMCGWMLKSSKPREQTRSRGFGRLLTGLQQGYGTSLKWVLNHTRLVGVVLLGTIALNIWLYISIPKTFFPEQDTGVLMGGIQADQSISFQAMRGKLQDFMKIIRDDPAVDNVTGFTGGSRVNSGMMFITLKSRGERHETAQQVIDRLRVALAKEPGANLFLMAVQDIRVGGRQANASYQYALLSDDLSALREWEPKIRKALAALPQLADVNSDQQDNGAEMNLIYDRETMSRLGIDVQAANSLLNNAFGQRQISTIYQPMNQYKVVMEVDSRYTQDISALEKMFVINSDGKAIPLSYFAKWQPANAPLSVNHQGLSAASTIAFNLPTGTSLSEATEAINRAMTQLGVPSTVRGSFAGTAQVFQETMNSQVILILAAIATVYIVLGILYESYVHPLTILSTLPSAGVGALLALELFNAPFSLIALIGIMLLIGIVKKNAIMMVDFALEAQRNGNLTPEQAIFQACLLRFRPIMMTTLAALFGALPLVISGGDGSELRQPLGITIVGGLVMSQLLTLYTTPVVYLFFDRLRLRFSRNNSQPESITEP.

12 helical membrane-spanning segments follow: residues 3–23 (FFAL…AITL), 333–353 (EVEQ…FLFL), 360–380 (LIPA…MYLC), 387–407 (LSLM…IVVL), 431–451 (VGFT…PLLL), 463–483 (FAVT…TLTP), 528–548 (LVGV…ISIP), 853–873 (VILI…LYES), 875–895 (VHPL…LLAL), 897–917 (LFNA…IGIV), 953–973 (PIMM…ISGG), and 984–1004 (ITIV…TPVV).

It belongs to the resistance-nodulation-cell division (RND) (TC 2.A.6) family. MdtC subfamily. In terms of assembly, part of a tripartite efflux system composed of MdtA, MdtB and MdtC. MdtC forms a heteromultimer with MdtB.

Its subcellular location is the cell inner membrane. This is Multidrug resistance protein MdtC from Citrobacter koseri (strain ATCC BAA-895 / CDC 4225-83 / SGSC4696).